A 34-amino-acid chain; its full sequence is Cycloamanide B proprotein (34 aa).

The propeptide occupies 1–10 (MSDINAARLP). Positions 11-17 (SFFFPIP) form a cross-link, cyclopeptide (Ser-Pro). Residues 18–34 (CISDDIEMVLTRGESLC) constitute a propeptide that is removed on maturation.

The protein belongs to the MSDIN fungal toxin family. Processed by the macrocyclase-peptidase enzyme POPB to yield a cyclic decapeptide. POPB first removes 10 residues from the N-terminus. Conformational trapping of the remaining peptide forces the enzyme to release this intermediate rather than proceed to macrocyclization. The enzyme rebinds the remaining peptide in a different conformation and catalyzes macrocyclization of the N-terminal 7 residues.

Its function is as follows. Cyclic heptapeptide that belongs to the MSDIN-like toxin family responsible for a large number of food poisoning cases and deaths. Cycloaminide B is non-toxic to mammals but shows immunosuppressive activity, probably through the inhibition of the action of interleukin-1 and interleukin-2. The sequence is that of Cycloamanide B proprotein from Amanita phalloides (Death cap).